The chain runs to 758 residues: EMILIN-3 (758 aa).

Positions 1 to 21 (MGRRLSVWLCTVAALLSGAQA) are cleaved as a signal peptide. Residues 54-130 (HKSLCAYVVH…PGLTGESCPE (77 aa)) enclose the EMI domain. 3 cysteine pairs are disulfide-bonded: cysteine 58/cysteine 120, cysteine 85/cysteine 91, and cysteine 119/cysteine 128. An N-linked (GlcNAc...) asparagine glycan is attached at asparagine 65. Positions 131–178 (HLTDHGATPPHQEPEPQIPLGQLGPGPRPSPYSREAPRPRGRKGQGPF) are disordered. Residues 379 to 401 (SQLALISARVDSLERNLQAVTET) are a coiled coil. N-linked (GlcNAc...) asparagine glycosylation occurs at asparagine 436. 2 coiled-coil regions span residues 460-483 (GSTL…ELSP) and 528-567 (AEVK…QLAE). N-linked (GlcNAc...) asparagine glycosylation is found at asparagine 555 and asparagine 609. Coiled coils occupy residues 642-677 (RQVL…ELQH) and 720-753 (HIDK…AEVR). N-linked (GlcNAc...) asparagine glycosylation is present at asparagine 725.

It is found in the secreted. The protein localises to the extracellular space. It localises to the extracellular matrix. Its subcellular location is the cytoplasm. This is EMILIN-3 (Emilin3) from Mus musculus (Mouse).